The primary structure comprises 111 residues: Photosystem II reaction center Psb28 protein (111 aa).

The protein belongs to the Psb28 family. Part of the photosystem II complex.

It localises to the cellular thylakoid membrane. This chain is Photosystem II reaction center Psb28 protein, found in Trichormus variabilis (strain ATCC 29413 / PCC 7937) (Anabaena variabilis).